A 514-amino-acid polypeptide reads, in one-letter code: ATP synthase subunit alpha (514 aa).

170–177 contacts ATP; that stretch reads GDRQIGKT.

The protein belongs to the ATPase alpha/beta chains family. In terms of assembly, F-type ATPases have 2 components, CF(1) - the catalytic core - and CF(0) - the membrane proton channel. CF(1) has five subunits: alpha(3), beta(3), gamma(1), delta(1), epsilon(1). CF(0) has three main subunits: a(1), b(2) and c(9-12). The alpha and beta chains form an alternating ring which encloses part of the gamma chain. CF(1) is attached to CF(0) by a central stalk formed by the gamma and epsilon chains, while a peripheral stalk is formed by the delta and b chains.

It localises to the cell inner membrane. The catalysed reaction is ATP + H2O + 4 H(+)(in) = ADP + phosphate + 5 H(+)(out). Its function is as follows. Produces ATP from ADP in the presence of a proton gradient across the membrane. The alpha chain is a regulatory subunit. The sequence is that of ATP synthase subunit alpha from Pseudomonas putida (strain W619).